Here is a 270-residue protein sequence, read N- to C-terminus: Glucosamine-6-phosphate deaminase (270 aa).

Catalysis depends on Asp-72, which acts as the Proton acceptor; for enolization step. The For ring-opening step role is filled by Asp-141. The Proton acceptor; for ring-opening step role is filled by His-143. The For ring-opening step role is filled by Glu-148.

This sequence belongs to the glucosamine/galactosamine-6-phosphate isomerase family. NagB subfamily. In terms of assembly, homohexamer.

The enzyme catalyses alpha-D-glucosamine 6-phosphate + H2O = beta-D-fructose 6-phosphate + NH4(+). It participates in amino-sugar metabolism; N-acetylneuraminate degradation; D-fructose 6-phosphate from N-acetylneuraminate: step 5/5. With respect to regulation, allosterically activated by N-acetylglucosamine 6-phosphate (GlcNAc6P). In terms of biological role, catalyzes the reversible isomerization-deamination of glucosamine 6-phosphate (GlcN6P) to form fructose 6-phosphate (Fru6P) and ammonium ion. The chain is Glucosamine-6-phosphate deaminase from Haemophilus influenzae (strain 86-028NP).